The following is a 136-amino-acid chain: Small ribosomal subunit protein uS9 (136 aa).

This sequence belongs to the universal ribosomal protein uS9 family.

In Borrelia duttonii (strain Ly), this protein is Small ribosomal subunit protein uS9.